Here is a 254-residue protein sequence, read N- to C-terminus: Trans-aconitate 2-methyltransferase (254 aa).

The protein belongs to the methyltransferase superfamily. Tam family.

It is found in the cytoplasm. It catalyses the reaction trans-aconitate + S-adenosyl-L-methionine = (E)-3-(methoxycarbonyl)pent-2-enedioate + S-adenosyl-L-homocysteine. Catalyzes the S-adenosylmethionine monomethyl esterification of trans-aconitate. The chain is Trans-aconitate 2-methyltransferase from Mycobacterium sp. (strain JLS).